Consider the following 35-residue polypeptide: Non-specific lipid-transfer protein 1 (35 aa).

An intrachain disulfide couples Cys13 to Cys28.

Seeds.

Its function is as follows. Plant non-specific lipid-transfer proteins transfer phospholipids as well as galactolipids across membranes. May play a role in wax or cutin deposition in the cell walls of expanding epidermal cells and certain secretory tissues. Inhibits the growth of F.oxysporum and P.infestans. This chain is Non-specific lipid-transfer protein 1, found in Nigella sativa (Black cumin).